The chain runs to 182 residues: UPF0397 protein VS_II0189 (182 aa).

5 helical membrane passes run 8 to 28 (VVVIAIGAALYGIGGLPMFGV), 41 to 61 (AVLALFSVLFGPIVGFLVGFI), 72 to 92 (WGVWLTWVLGSGIVGMVIGLF), 110 to 130 (FALFVVLALAGNVVGYGSSAF), and 146 to 166 (QLSIIAAGNTILIAVVGFLIL).

This sequence belongs to the UPF0397 family.

Its subcellular location is the cell membrane. In Vibrio atlanticus (strain LGP32) (Vibrio splendidus (strain Mel32)), this protein is UPF0397 protein VS_II0189.